The following is a 420-amino-acid chain: Protein BDLF2 (420 aa).

Disordered regions lie at residues 1-21 and 64-129; these read MVDE…SREE and AAAV…GGQR. Topologically, residues 1–184 are intravirion; that stretch reads MVDEQVAVEH…AETLAEPPRC (184 aa). Residues 92–108 are compositionally biased toward low complexity; the sequence is TNTQDQNQNQTTRARTN. A helical; Signal-anchor for type II membrane protein membrane pass occupies residues 185–205; that stretch reads FMLSFVFIYYCCYLAFLALLA. The Virion surface portion of the chain corresponds to 206–420; it reads FGFNPLFLPS…LEEVMYVMVQ (215 aa). N-linked (GlcNAc...) asparagine; by host glycosylation is found at asparagine 258, asparagine 264, asparagine 300, asparagine 304, asparagine 371, and asparagine 384.

The protein belongs to the herpesviridae BDLF2 family. In terms of assembly, interacts with BMRF2.

It localises to the virion membrane. Rearranges cellular actin to increase intercellular contacts and thereby promote virus cell-to-cell spreading. Induce the outgrowth of long, branched plasma membrane fronds to create intercellular network for virion traffic. The fronds are actin based and RhoA-dependent. This chain is Protein BDLF2, found in Epstein-Barr virus (strain GD1) (HHV-4).